Reading from the N-terminus, the 65-residue chain is MPKIKTVRGAAKRFKKTASGGFKRKRANLRHILTKKSTKRKRHLRPKGMVSKGDLGLVVACLPYA.

Belongs to the bacterial ribosomal protein bL35 family.

This chain is Large ribosomal subunit protein bL35, found in Photorhabdus laumondii subsp. laumondii (strain DSM 15139 / CIP 105565 / TT01) (Photorhabdus luminescens subsp. laumondii).